Reading from the N-terminus, the 367-residue chain is Carbohydrate sulfotransferase 14 (367 aa).

The Cytoplasmic segment spans residues 1–34 (MPPRKKEYGIKRASGSLVHFRAPVSATTIRRHSA). Residues 35-55 (VVPSVLTFAVIVASGGLLLMI) form a helical; Signal-anchor for type II membrane protein membrane-spanning segment. Over 56–367 (EKGMLNSVQT…PNTTTEYCRH (312 aa)) the chain is Lumenal. Asn99 is a glycosylation site (N-linked (GlcNAc...) asparagine). Residues 144-150 (PKVACSN) and 202-210 (REPMARLLS) each bind 3'-phosphoadenylyl sulfate. An N-linked (GlcNAc...) asparagine glycan is attached at Asn359.

This sequence belongs to the sulfotransferase 2 family.

Its subcellular location is the golgi apparatus membrane. Functionally, catalyzes the transfer of sulfate to position 4 of the N-acetylgalactosamine (GalNAc) residue of dermatan sulfate. The polypeptide is Carbohydrate sulfotransferase 14 (chst14) (Danio rerio (Zebrafish)).